A 463-amino-acid chain; its full sequence is 23S rRNA (uracil(1939)-C(5))-methyltransferase RlmD (463 aa).

Residues 6 to 76 form the TRAM domain; it reads KSRKPQQPEY…KRLEEAEMVE (71 aa). Positions 90, 96, 99, and 178 each coordinate [4Fe-4S] cluster. Residues glutamine 288, phenylalanine 317, asparagine 322, glutamate 341, aspartate 368, and aspartate 389 each coordinate S-adenosyl-L-methionine. Cysteine 415 acts as the Nucleophile in catalysis.

The protein belongs to the class I-like SAM-binding methyltransferase superfamily. RNA M5U methyltransferase family. RlmD subfamily.

The enzyme catalyses uridine(1939) in 23S rRNA + S-adenosyl-L-methionine = 5-methyluridine(1939) in 23S rRNA + S-adenosyl-L-homocysteine + H(+). In terms of biological role, catalyzes the formation of 5-methyl-uridine at position 1939 (m5U1939) in 23S rRNA. The sequence is that of 23S rRNA (uracil(1939)-C(5))-methyltransferase RlmD from Acinetobacter baumannii (strain AYE).